The sequence spans 136 residues: Large ribosomal subunit protein uL16c (136 aa).

The tract at residues 1 to 20 is disordered; sequence MLSPKRTRFRKQHRGRMKGK.

It belongs to the universal ribosomal protein uL16 family. As to quaternary structure, part of the 50S ribosomal subunit.

The protein resides in the plastid. It is found in the chloroplast. This is Large ribosomal subunit protein uL16c from Agrostis stolonifera (Creeping bentgrass).